A 60-amino-acid polypeptide reads, in one-letter code: Large ribosomal subunit protein uL30 (60 aa).

This sequence belongs to the universal ribosomal protein uL30 family. In terms of assembly, part of the 50S ribosomal subunit.

The sequence is that of Large ribosomal subunit protein uL30 from Pediococcus pentosaceus (strain ATCC 25745 / CCUG 21536 / LMG 10740 / 183-1w).